The sequence spans 307 residues: Cyclin-dependent kinase 5 activator 1 (307 aa).

Gly2 is lipidated: N-myristoyl glycine. At Ser8 the chain carries Phosphoserine; by CDK5. The tract at residues 97–136 (TFAQPPPAQPPAPPASQLSGSQTGGSSSVKKAPHPAVTSA) is disordered. Residues 100-110 (QPPPAQPPAPP) show a composition bias toward pro residues. Residues 111–124 (ASQLSGSQTGGSSS) are compositionally biased toward low complexity. Thr138 is modified (phosphothreonine; by CDK5).

The protein belongs to the cyclin-dependent kinase 5 activator family. As to quaternary structure, heterodimer composed of a catalytic subunit CDK5 and a regulatory subunit CDK5R1 (p25) and macromolecular complex composed of at least CDK5, CDK5R1 (p35) and CDK5RAP1 or CDK5RAP2 or CDK5RAP3. Only the heterodimer shows kinase activity. Interacts with EPHA4 and NGEF; may mediate the activation of NGEF by EPHA4. Interacts with RASGRF2. The complex p35/CDK5 interacts with CLOCK. Post-translationally, the p35 form is proteolytically cleaved by calpain, giving rise to the p25 form. P35 has a 5 to 10 fold shorter half-life compared to p25. The conversion results in deregulation of the CDK5 kinase: p25/CDK5 kinase displays an increased and altered tau phosphorylation in comparison to the p35/CDK5 kinase in vivo. In terms of processing, myristoylated. A proper myristoylation signal is essential for the proper distribution of p35. Ubiquitinated, leading to its degradation: degradation of p35 by proteasome results in down-regulation of CDK5 activity. During this process, CDK5 phosphorylates p35 and induces its ubiquitination and subsequent degradation. Ubiquitinated by the CRL2(FEM1B) complex, which recognizes the -Gly-Leu-Asp-Arg C-degron at the C-terminus, leading to its degradation. Post-translationally, phosphorylation at Ser-8 and Thr-138 by CDK5 prevents calpain-mediated proteolysis. Brain and neuron specific.

It localises to the cell membrane. It is found in the cell projection. The protein resides in the neuron projection. Its subcellular location is the nucleus. The protein localises to the cytoplasm. It localises to the perinuclear region. It is found in the perikaryon. In terms of biological role, p35 is a neuron specific activator of CDK5. The complex p35/CDK5 is required for neurite outgrowth and cortical lamination. Involved in dendritic spine morphogenesis by mediating the EFNA1-EPHA4 signaling. Activator of TPKII. The complex p35/CDK5 participates in the regulation of the circadian clock by modulating the function of CLOCK protein: phosphorylates CLOCK at 'Thr-451' and 'Thr-461' and regulates the transcriptional activity of the CLOCK-BMAL1 heterodimer in association with altered stability and subcellular distribution. The sequence is that of Cyclin-dependent kinase 5 activator 1 (CDK5R1) from Homo sapiens (Human).